We begin with the raw amino-acid sequence, 286 residues long: P2R1A-PPP2R2A-interacting phosphatase regulator 1 (286 aa).

The segment at 1-46 (MAQEKMELDLELPAGTGASPAEGGGPGSGGLRRSNSAPLIHGLSDS) is disordered. Position 34 is a phosphoserine (Ser34). Ser36 carries the post-translational modification Phosphoserine; by CHEK1. Phosphoserine is present on residues Ser44, Ser47, Ser61, and Ser75. A Glycyl lysine isopeptide (Lys-Gly) (interchain with G-Cter in SUMO1) cross-link involves residue Lys88. 2 positions are modified to phosphoserine: Ser142 and Ser146. Phosphothreonine is present on Thr148. The segment at 166–187 (SNGLPPSPIPSPTTRFTTRRSQ) is disordered. Low complexity predominate over residues 177 to 187 (PTTRFTTRRSQ). 2 positions are modified to phosphoserine: Ser186 and Ser188. A disordered region spans residues 238-286 (VSSDTLDGNSSSAGSSCNSPAKVSTTTDSPVSPAQAASPFIPVDELSSK). Over residues 245-256 (GNSSSAGSSCNS) the composition is skewed to low complexity. Polar residues predominate over residues 258-269 (AKVSTTTDSPVS). Ser266, Ser269, and Ser275 each carry phosphoserine.

Belongs to the FAM122 family. In terms of assembly, interacts with PPP2CA and PPP2R1A. Interacts (via its N-terminus) with PPP2R2A; the interaction is direct and this interaction inhibits PP2A activity. The CHEK1-mediated Ser-36 phosphorylated form interacts with 14-3-3 proteins. CHEK1-mediated phosphorylation at Ser-36 negatively regulates its ability to inhibit serine/threonine-protein phosphatase 2A (PP2A) activity. Phosphorylation leads to its release from the PP2A complex and its sequestration by 14-3-3 proteins in the cytoplasm resulting in its inability to translocate to the nucleus, where it otherwise inhibits PP2A.

The protein resides in the nucleus. It is found in the cytoplasm. Acts as an inhibitor of serine/threonine-protein phosphatase 2A (PP2A) activity. Inhibits PP2A activity by blocking the substrate binding site on PPP2R2A and the active site of PPP2CA. Potentiates ubiquitin-mediated proteasomal degradation of serine/threonine-protein phosphatase 2A catalytic subunit alpha (PPP2CA). Inhibits PP2A-mediated dephosphorylation of WEE1, promoting ubiquitin-mediated proteolysis of WEE1, thereby releasing G2/M checkpoint. The protein is P2R1A-PPP2R2A-interacting phosphatase regulator 1 of Rattus norvegicus (Rat).